We begin with the raw amino-acid sequence, 612 residues long: Elongation factor 4 (612 aa).

Residues 12-194 form the tr-type G domain; the sequence is SRIRNFSIIA…QIVEKVPAPT (183 aa). GTP is bound by residues 24 to 29 and 141 to 144; these read DHGKST and NKID.

Belongs to the TRAFAC class translation factor GTPase superfamily. Classic translation factor GTPase family. LepA subfamily.

Its subcellular location is the cell membrane. It catalyses the reaction GTP + H2O = GDP + phosphate + H(+). Its function is as follows. Required for accurate and efficient protein synthesis under certain stress conditions. May act as a fidelity factor of the translation reaction, by catalyzing a one-codon backward translocation of tRNAs on improperly translocated ribosomes. Back-translocation proceeds from a post-translocation (POST) complex to a pre-translocation (PRE) complex, thus giving elongation factor G a second chance to translocate the tRNAs correctly. Binds to ribosomes in a GTP-dependent manner. The polypeptide is Elongation factor 4 (Bacillus subtilis (strain 168)).